Consider the following 382-residue polypeptide: Mannitol-1-phosphate 5-dehydrogenase (382 aa).

4-15 (AVHFGAGNIGRG) lines the NAD(+) pocket.

This sequence belongs to the mannitol dehydrogenase family.

It catalyses the reaction D-mannitol 1-phosphate + NAD(+) = beta-D-fructose 6-phosphate + NADH + H(+). The polypeptide is Mannitol-1-phosphate 5-dehydrogenase (Vibrio vulnificus (strain YJ016)).